Consider the following 428-residue polypeptide: Phosphomethylpyrimidine synthase 1 (428 aa).

Residues M94, Y123, H162, 184–186, 225–228, and E264 each bind substrate; these read SRG and NGMR. H268 lines the Zn(2+) pocket. Y291 contacts substrate. H332 is a Zn(2+) binding site. 3 residues coordinate [4Fe-4S] cluster: C408, C411, and C415.

Belongs to the ThiC family. [4Fe-4S] cluster is required as a cofactor.

The enzyme catalyses 5-amino-1-(5-phospho-beta-D-ribosyl)imidazole + S-adenosyl-L-methionine = 4-amino-2-methyl-5-(phosphooxymethyl)pyrimidine + CO + 5'-deoxyadenosine + formate + L-methionine + 3 H(+). It functions in the pathway cofactor biosynthesis; thiamine diphosphate biosynthesis. Functionally, catalyzes the synthesis of the hydroxymethylpyrimidine phosphate (HMP-P) moiety of thiamine from aminoimidazole ribotide (AIR) in a radical S-adenosyl-L-methionine (SAM)-dependent reaction. The chain is Phosphomethylpyrimidine synthase 1 from Methanosarcina barkeri (strain Fusaro / DSM 804).